A 131-amino-acid polypeptide reads, in one-letter code: Profilin-6 (131 aa).

The cysteines at positions 13 and 115 are disulfide-linked. The Involved in PIP2 interaction motif lies at 81-97 (AVIRGKKGSGGITVKKT). Thr-111 carries the post-translational modification Phosphothreonine.

It belongs to the profilin family. Occurs in many kinds of cells as a complex with monomeric actin in a 1:1 ratio. Post-translationally, phosphorylated by MAP kinases.

The protein resides in the cytoplasm. The protein localises to the cytoskeleton. Binds to actin and affects the structure of the cytoskeleton. At high concentrations, profilin prevents the polymerization of actin, whereas it enhances it at low concentrations. This is Profilin-6 from Zea mays (Maize).